We begin with the raw amino-acid sequence, 1278 residues long: Dynactin subunit 1 (1278 aa).

Residues 1–25 are disordered; it reads MAQSKRHVYSRTPSGSRMSAEASAR. One can recognise a CAP-Gly domain in the interval 48–90; the sequence is GATLFATGKWVGVILDEAKGKNDGTVQGRKYFTCDEGHGIFVR. The segment at 100 to 223 is disordered; the sequence is GADTTSPETP…SKEEEGLRAQ (124 aa). Polar residues predominate over residues 102 to 114; the sequence is DTTSPETPDSSAS. Thr108 carries the phosphothreonine modification. The span at 129-152 shows a compositional bias: basic residues; sequence SKLRGLKPKKAPTARKTTTRRPKP. Thr145, Thr146, and Thr147 each carry phosphothreonine; by SLK. A compositionally biased stretch (low complexity) spans 161-184; that stretch reads AGASSSLGPSGSASAGELSSSEPS. At Ser179 the chain carries Phosphoserine; by PLK1. Ser212 carries the post-translational modification Phosphoserine; by CDK1. 3 coiled-coil regions span residues 213–547, 943–1049, and 1182–1211; these read PSKE…RQQQ, LKLE…EGLR, and SAQLMEQVAQLKSLSDTVEKLKDEVLKETV. The span at 214–223 shows a compositional bias: basic and acidic residues; the sequence is SKEEEGLRAQ. The interaction with HPS6 stretch occupies residues 911-1278; sequence EYDAERPPSK…LHQLHSRLIS (368 aa).

The protein belongs to the dynactin 150 kDa subunit family. In terms of assembly, monomer and homodimer. Subunit of dynactin, a multiprotein complex part of a tripartite complex with dynein and a adapter, such as BICDL1, BICD2 or HOOK3. The dynactin complex is built around ACTR1A/ACTB filament and consists of an actin-related filament composed of a shoulder domain, a pointed end and a barbed end. Its length is defined by its flexible shoulder domain. The soulder is composed of 2 DCTN1 subunits, 4 DCTN2 and 2 DCTN3. DCTN1/p150(glued) binds directly to microtubules and to cytoplasmic dynein. The 4 DCNT2 (via N-terminus) bind the ACTR1A filament and act as molecular rulers to determine the length. The pointed end is important for binding dynein-dynactin cargo adapters. Consists of 4 subunits: ACTR10, DCNT4, DCTN5 and DCTN6. The barbed end is composed of a CAPZA1:CAPZB heterodimers, which binds ACTR1A/ACTB filament and dynactin and stabilizes dynactin. Interacts with the C-terminus of MAPRE1, MAPRE2 and MAPRE3. Interacts (via C-terminus) with SNX6. Interacts with CLN3, DYNAP, ECPAS and FBXL5. Interacts with MISP; this interaction regulates its distribution at the cell cortex. Interacts with CEP131. Interacts with CEP126. Interacts with CLIP1. Interacts with dynein intermediate chain and dynein heavy chain. Interacts with PLK1 (via POLO-box domain). Interacts with TBCB. Binds preferentially to tyrosinated microtubules than to detyrosinated microtubules. Interacts with PARD6A. Interacts with HPS6. Interacts with KIF3A. Interacts with BICD2. Interacts with DST (isoform 9). Interacts with DST (isoform 1). Identified in a complex with MREG and RILP. Interacts with BCCIP (isoform 2/alpha). Interacts with DCDC1. Interacts with AKNA. Interacts with DYNC1I2. Interacts with RUFY3 and RUFY4. Ubiquitinated by a SCF complex containing FBXL5, leading to its degradation by the proteasome. Post-translationally, phosphorylation by SLK at Thr-145, Thr-146 and Thr-147 targets DCTN1 to the centrosome. It is uncertain if SLK phosphorylates all three threonines or one or two of them. PLK1-mediated phosphorylation at Ser-179 is essential for its localization in the nuclear envelope, promotes its dissociation from microtubules during early mitosis and positively regulates nuclear envelope breakdown during prophase. As to expression, brain.

Its subcellular location is the cytoplasm. It localises to the cytoskeleton. The protein resides in the microtubule organizing center. The protein localises to the centrosome. It is found in the centriole. Its subcellular location is the spindle. It localises to the nucleus envelope. The protein resides in the cell cortex. In terms of biological role, part of the dynactin complex that activates the molecular motor dynein for ultra-processive transport along microtubules. Plays a key role in dynein-mediated retrograde transport of vesicles and organelles along microtubules by recruiting and tethering dynein to microtubules. Binds to both dynein and microtubules providing a link between specific cargos, microtubules and dynein. Essential for targeting dynein to microtubule plus ends, recruiting dynein to membranous cargos and enhancing dynein processivity (the ability to move along a microtubule for a long distance without falling off the track). Can also act as a brake to slow the dynein motor during motility along the microtubule. Can regulate microtubule stability by promoting microtubule formation, nucleation and polymerization and by inhibiting microtubule catastrophe in neurons. Inhibits microtubule catastrophe by binding both to microtubules and to tubulin, leading to enhanced microtubule stability along the axon. Plays a role in metaphase spindle orientation. Plays a role in centriole cohesion and subdistal appendage organization and function. Its recruitment to the centriole in a KIF3A-dependent manner is essential for the maintenance of centriole cohesion and the formation of subdistal appendage. Also required for microtubule anchoring at the mother centriole. Plays a role in primary cilia formation. The sequence is that of Dynactin subunit 1 from Homo sapiens (Human).